The sequence spans 347 residues: NADH-ubiquinone oxidoreductase chain 2 (347 aa).

The next 11 membrane-spanning stretches (helical) occupy residues 3-23 (PPIL…VLMS), 25-45 (HWLM…PILM), 59-79 (YFLT…INLM), 96-116 (TMMT…FWVP), 122-142 (VHMS…LLVL), 149-169 (IDPN…GWGG), 178-198 (ILAY…LYNP), 200-220 (MMLL…MLFM), 242-262 (SLIL…GFIP), 274-294 (EMII…YFYM), and 323-343 (MILL…TPLL).

Belongs to the complex I subunit 2 family. In terms of assembly, core subunit of respiratory chain NADH dehydrogenase (Complex I) which is composed of 45 different subunits. Interacts with TMEM242.

It is found in the mitochondrion inner membrane. It catalyses the reaction a ubiquinone + NADH + 5 H(+)(in) = a ubiquinol + NAD(+) + 4 H(+)(out). Functionally, core subunit of the mitochondrial membrane respiratory chain NADH dehydrogenase (Complex I) that is believed to belong to the minimal assembly required for catalysis. Complex I functions in the transfer of electrons from NADH to the respiratory chain. The immediate electron acceptor for the enzyme is believed to be ubiquinone. This chain is NADH-ubiquinone oxidoreductase chain 2, found in Suricata suricatta (Meerkat).